We begin with the raw amino-acid sequence, 339 residues long: Ketol-acid reductoisomerase (NADP(+)) (339 aa).

Residues 1 to 182 (MKVYYDADCD…GGGRSGIIET (182 aa)) form the KARI N-terminal Rossmann domain. Residues 24–27 (YGSQ), Arg48, Ser51, Ser53, and 83–86 (DEHQ) contribute to the NADP(+) site. His108 is a catalytic residue. Gly134 is an NADP(+) binding site. Residues 183-328 (NFREECETDL…AKLRAMMPWI (146 aa)) form the KARI C-terminal knotted domain. 4 residues coordinate Mg(2+): Asp191, Glu195, Glu227, and Glu231. Ser252 is a substrate binding site.

This sequence belongs to the ketol-acid reductoisomerase family. The cofactor is Mg(2+).

The catalysed reaction is (2R)-2,3-dihydroxy-3-methylbutanoate + NADP(+) = (2S)-2-acetolactate + NADPH + H(+). It catalyses the reaction (2R,3R)-2,3-dihydroxy-3-methylpentanoate + NADP(+) = (S)-2-ethyl-2-hydroxy-3-oxobutanoate + NADPH + H(+). The protein operates within amino-acid biosynthesis; L-isoleucine biosynthesis; L-isoleucine from 2-oxobutanoate: step 2/4. It participates in amino-acid biosynthesis; L-valine biosynthesis; L-valine from pyruvate: step 2/4. In terms of biological role, involved in the biosynthesis of branched-chain amino acids (BCAA). Catalyzes an alkyl-migration followed by a ketol-acid reduction of (S)-2-acetolactate (S2AL) to yield (R)-2,3-dihydroxy-isovalerate. In the isomerase reaction, S2AL is rearranged via a Mg-dependent methyl migration to produce 3-hydroxy-3-methyl-2-ketobutyrate (HMKB). In the reductase reaction, this 2-ketoacid undergoes a metal-dependent reduction by NADPH to yield (R)-2,3-dihydroxy-isovalerate. This chain is Ketol-acid reductoisomerase (NADP(+)), found in Novosphingobium aromaticivorans (strain ATCC 700278 / DSM 12444 / CCUG 56034 / CIP 105152 / NBRC 16084 / F199).